The sequence spans 403 residues: Histidine--tRNA ligase (403 aa).

The protein belongs to the class-II aminoacyl-tRNA synthetase family. In terms of assembly, homodimer.

The protein resides in the cytoplasm. The enzyme catalyses tRNA(His) + L-histidine + ATP = L-histidyl-tRNA(His) + AMP + diphosphate + H(+). The chain is Histidine--tRNA ligase from Sulfurovum sp. (strain NBC37-1).